The primary structure comprises 402 residues: Sensor protein kinase FleS (402 aa).

The 206-residue stretch at 188 to 393 folds into the Histidine kinase domain; sequence SLAHQIRTPL…CATLILPLIP (206 aa). His191 is modified (phosphohistidine; by autocatalysis).

The catalysed reaction is ATP + protein L-histidine = ADP + protein N-phospho-L-histidine.. In terms of biological role, member of the two-component regulatory system FleS/FleR that regulates the expression of multiple genes involved in flagellar synthesis, adhesion, swarming, motility and antibiotic resistance. May function as a membrane-associated protein kinase that phosphorylates FleR in response to environmental signals leading to activation of specific gene promoters. The polypeptide is Sensor protein kinase FleS (fleS) (Pseudomonas aeruginosa (strain ATCC 15692 / DSM 22644 / CIP 104116 / JCM 14847 / LMG 12228 / 1C / PRS 101 / PAO1)).